A 620-amino-acid polypeptide reads, in one-letter code: Chaperone protein HscA homolog (620 aa).

The protein belongs to the heat shock protein 70 family.

Its function is as follows. Chaperone involved in the maturation of iron-sulfur cluster-containing proteins. Has a low intrinsic ATPase activity which is markedly stimulated by HscB. This Shewanella sediminis (strain HAW-EB3) protein is Chaperone protein HscA homolog.